We begin with the raw amino-acid sequence, 254 residues long: Photosystem II 22 kDa protein 2, chloroplastic (254 aa).

The N-terminal 38 residues, 1–38 (MALQQSMAMPMMVVSGLGTAPRSSPMVQLQRMKKHLVV), are a transit peptide targeting the chloroplast. Repeat copies occupy residues 42–148 (FKSR…FVDD) and 149–253 (ATGL…DNDD). 4 consecutive transmembrane segments (helical) span residues 86–106 (VAML…KGIL), 120–140 (AEPL…GALG), 184–204 (LFVG…EIIT), and 219–239 (PINE…FAAI).

Belongs to the ELIP/psbS family.

It is found in the plastid. It localises to the chloroplast thylakoid membrane. Involved in high light-mediated energy-dependent nonphotochemical quenching (NPQ, qE) and thermal dissipation (TD) thus regulating energy conversion in photosystem II and protecting from photoinhibition. Also seems to regulate quantum yield of electron transport in fluctuating light conditions. The polypeptide is Photosystem II 22 kDa protein 2, chloroplastic (Oryza sativa subsp. indica (Rice)).